A 205-amino-acid polypeptide reads, in one-letter code: Guanylate kinase (205 aa).

The 179-residue stretch at 5-183 (GLLIVFSGPS…AAERVKKIIE (179 aa)) folds into the Guanylate kinase-like domain. 12–19 (GPSGVGKG) is an ATP binding site.

This sequence belongs to the guanylate kinase family.

It is found in the cytoplasm. It carries out the reaction GMP + ATP = GDP + ADP. Its function is as follows. Essential for recycling GMP and indirectly, cGMP. The protein is Guanylate kinase (gmk) of Lactococcus lactis subsp. lactis (strain IL1403) (Streptococcus lactis).